We begin with the raw amino-acid sequence, 261 residues long: Type III pantothenate kinase (261 aa).

6 to 13 is an ATP binding site; sequence DAGNTNVV. 108–111 lines the substrate pocket; it reads GADR. Aspartate 110 (proton acceptor) is an active-site residue. Aspartate 130 contributes to the K(+) binding site. Residue threonine 133 coordinates ATP. Threonine 185 serves as a coordination point for substrate.

This sequence belongs to the type III pantothenate kinase family. In terms of assembly, homodimer. It depends on NH4(+) as a cofactor. K(+) is required as a cofactor.

It is found in the cytoplasm. It catalyses the reaction (R)-pantothenate + ATP = (R)-4'-phosphopantothenate + ADP + H(+). It participates in cofactor biosynthesis; coenzyme A biosynthesis; CoA from (R)-pantothenate: step 1/5. Functionally, catalyzes the phosphorylation of pantothenate (Pan), the first step in CoA biosynthesis. The sequence is that of Type III pantothenate kinase from Rhodospirillum centenum (strain ATCC 51521 / SW).